A 200-amino-acid chain; its full sequence is Probable GTP-binding protein EngB (200 aa).

The 175-residue stretch at 26 to 200 folds into the EngB-type G domain; it reads SIPEIAIAGR…IYEIAQCIKK (175 aa). GTP contacts are provided by residues 34–41, 61–65, 80–83, 147–150, and 179–181; these read GRSNVGKS, GCTKQ, DLPG, TKID, and TSS. Mg(2+)-binding residues include Ser41 and Thr63.

It belongs to the TRAFAC class TrmE-Era-EngA-EngB-Septin-like GTPase superfamily. EngB GTPase family. It depends on Mg(2+) as a cofactor.

Functionally, necessary for normal cell division and for the maintenance of normal septation. This chain is Probable GTP-binding protein EngB, found in Ehrlichia chaffeensis (strain ATCC CRL-10679 / Arkansas).